The sequence spans 69 residues: Large ribosomal subunit protein uL29 (69 aa).

Belongs to the universal ribosomal protein uL29 family.

The chain is Large ribosomal subunit protein uL29 (rpmC) from Lactococcus lactis subsp. lactis (strain IL1403) (Streptococcus lactis).